The following is a 2541-amino-acid chain: Highly reducing polyketide synthase otaA (2541 aa).

The region spanning 9–431 (SEPLAIIGLA…GTNAHVVLED (423 aa)) is the Ketosynthase family 3 (KS3) domain. Active-site for beta-ketoacyl synthase activity residues include cysteine 182, histidine 317, and histidine 355. One can recognise a Malonyl-CoA:ACP transacylase (MAT) domain in the interval 571-888 (FIFTGQGANW…GSLLKRYETD (318 aa)). The segment at 957–1092 (HELLGVPVED…GSVRVETGPH (136 aa)) is N-terminal hotdog fold. The dehydratase (DH) domain stretch occupies residues 957–1251 (HELLGVPVED…GLDLVQLPPS (295 aa)). A PKS/mFAS DH domain is found at 957-1254 (HELLGVPVED…LVQLPPSEDA (298 aa)). The tract at residues 1108–1254 (TESVDIAQMY…LVQLPPSEDA (147 aa)) is C-terminal hotdog fold. S-adenosyl-L-methionine-binding residues include isoleucine 1420 and glutamate 1442. Residues 1433 to 1605 (HAQTGIKVLE…DQELRNAGLQ (173 aa)) form a methyltransferase (CMeT) domain region. The 304-residue stretch at 1838-2141 (HQPNGFHFVE…RQGNAGPWVL (304 aa)) folds into the Enoyl reductase (ER) domain. Residues 2165 to 2344 (ASYLLIGGFG…PATSISLGSV (180 aa)) enclose the Ketoreductase (KR) domain. Residues 2453–2530 (DAVELVTRAI…QLAQQAAGGS (78 aa)) enclose the Carrier domain. Serine 2490 is modified (O-(pantetheine 4'-phosphoryl)serine).

The cofactor is pantetheine 4'-phosphate.

The enzyme catalyses 4 malonyl-CoA + acetyl-CoA + 5 NADPH + 9 H(+) = 7-methylmellein + 3 CO2 + 5 NADP(+) + 5 CoA + 4 H2O. It functions in the pathway mycotoxin biosynthesis. In terms of biological role, highly reducing polyketide synthase; part of the gene cluster that mediates the biosynthesis of ochratoxin A (OTA), a mycotoxin composed of a chlorinated type I polyketide dihydroisocoumarin moiety linked to L-phenylalanine, and demonstrated to have nephrotoxic, immunotoxic, genotoxic, neurotoxic, and teratogenic properties. OtaA catalyzes the condensation of one acetate and 4 malonate units to form the isocoumarin group. The pathway begins with the highly reducing polyketide synthase otaA that catalyzes the formation of the isocoumarin group during the initial stages of biosynthesis, starting from one acetate and 4 malonate units, to originate the characteristic pentaketide skeleton 7-methylmellein (7-MM) of the OTA molecule. The newly identified cyclase otaY might be involved in the polyketide cyclization reaction during the initial steps of the OTA biosynthesis. 7-MM is then oxidized into 7-carboxymellein (also called ochratoxin beta) by the cytochrome P450 monooxygenase otaC. The NRPS encoded by the otaB gene is involved in the linking of phenylalanine to the dihydroisocoumarin ring. The reaction catalyzed by NRPS results in the production of ochratoxin B (OTB), which is the non-chlorinated analog of OTA and which subsequently serves as the substrate of the halogenase otaD for chlorination activity to form the final molecular structure of OTA, containing a chlorine atom in the C-5 position of the molecule. This Aspergillus carbonarius (strain ITEM 5010) protein is Highly reducing polyketide synthase otaA.